The sequence spans 315 residues: Methenyltetrahydromethanopterin cyclohydrolase (315 aa).

This sequence belongs to the MCH family.

It is found in the cytoplasm. The enzyme catalyses 5,10-methenyl-5,6,7,8-tetrahydromethanopterin + H2O = N(5)-formyl-5,6,7,8-tetrahydromethanopterin + H(+). It participates in one-carbon metabolism; methanogenesis from CO(2); 5,10-methenyl-5,6,7,8-tetrahydromethanopterin from CO(2): step 3/3. Functionally, catalyzes the reversible interconversion of 5-formyl-H(4)MPT to methenyl-H(4)MPT(+). This Methanospirillum hungatei JF-1 (strain ATCC 27890 / DSM 864 / NBRC 100397 / JF-1) protein is Methenyltetrahydromethanopterin cyclohydrolase.